The sequence spans 604 residues: Protein TAX4 (604 aa).

Disordered stretches follow at residues 38-77 (HPNGNAGSAERPRHLKVESAPVVKSEPSLPRMRQPEPRSI), 133-249 (FSNR…RQQE), 267-300 (GTLPDLIPRSQRKTSKPRFKHKLLRSPEQQQENL), 338-380 (DETF…KGLK), and 394-428 (PFPHHHHHHHQLHNPNSHHLHTHHHTSSHKFNEDK). A compositionally biased stretch (polar residues) spans 176–185 (YDNNVRSRSI). Composition is skewed to low complexity over residues 186 to 203 (SPQVSYSTSLSSSCSISS) and 224 to 240 (SMSSYSLASKASAKASL). 3 stretches are compositionally biased toward basic residues: residues 276 to 290 (SQRKTSKPRFKHKLL), 366 to 379 (KKKKSRRSKIKKGL), and 396 to 421 (PHHHHHHHQLHNPNSHHLHTHHHTSS). The 91-residue stretch at 469–559 (ANEDDESHLQ…RVWNSVDGYV (91 aa)) folds into the EH domain.

This sequence belongs to the IRS4 family. Interacts with INP51.

Functionally, with IRS4, acts as a positive regulator of INP51 activity and phosphatidylinositol 4,5-bisphosphate turnover. Negatively regulates signaling through the cell integrity pathway, including the MAP kinase SLT2. This is Protein TAX4 (TAX4) from Saccharomyces cerevisiae (strain YJM789) (Baker's yeast).